The following is a 367-amino-acid chain: WD repeat-containing protein 31 (367 aa).

WD repeat units lie at residues 53 to 90 (AFQE…AYNW), 94 to 132 (NVVK…MWDL), 137 to 175 (QPRQ…LWDV), 179 to 217 (QSVE…LWDS), 221 to 264 (QVAH…LWDL), 269 to 311 (NRIC…IWNQ), and 315 to 353 (ACLF…LLRM).

The chain is WD repeat-containing protein 31 (WDR31) from Homo sapiens (Human).